Reading from the N-terminus, the 358-residue chain is Triacylglycerol lipase (358 aa).

Positions 1–39 (MVRSMRSRVAARAVAWALAVMPLAGAAGLTMAASPAAVA) are cleaved as a signal peptide. The AB hydrolase-1 domain maps to 48 to 327 (YPVILVHGLA…TSYHWNHLDE (280 aa)). Substrate is bound at residue Leu-56. Ser-126 functions as the Nucleophile in the catalytic mechanism. Gln-127 is a binding site for substrate. Residues Cys-229 and Cys-308 are joined by a disulfide bond. A Ca(2+)-binding site is contributed by Asp-280. Catalysis depends on charge relay system residues Asp-302 and His-324. Positions 326, 330, and 334 each coordinate Ca(2+).

This sequence belongs to the AB hydrolase superfamily. Pseudomonas lipase family. Monomer. Interacts with lipase-specific foldase Lif. Requires Ca(2+) as cofactor.

It localises to the secreted. It catalyses the reaction a triacylglycerol + H2O = a diacylglycerol + a fatty acid + H(+). Catalyzes the hydrolysis of triacylglycerol. The sequence is that of Triacylglycerol lipase from Burkholderia plantarii.